Reading from the N-terminus, the 503-residue chain is UDP-N-acetylmuramoylalanine--D-glutamate ligase (503 aa).

129–135 contacts ATP; that stretch reads GTNGKTT.

This sequence belongs to the MurCDEF family.

The protein resides in the cytoplasm. The enzyme catalyses UDP-N-acetyl-alpha-D-muramoyl-L-alanine + D-glutamate + ATP = UDP-N-acetyl-alpha-D-muramoyl-L-alanyl-D-glutamate + ADP + phosphate + H(+). Its pathway is cell wall biogenesis; peptidoglycan biosynthesis. In terms of biological role, cell wall formation. Catalyzes the addition of glutamate to the nucleotide precursor UDP-N-acetylmuramoyl-L-alanine (UMA). In Burkholderia vietnamiensis (strain G4 / LMG 22486) (Burkholderia cepacia (strain R1808)), this protein is UDP-N-acetylmuramoylalanine--D-glutamate ligase.